A 56-amino-acid chain; its full sequence is PI-stichotoxin-Hcr2a (56 aa).

One can recognise a BPTI/Kunitz inhibitor domain in the interval 4–54 (CLEPKVVGPCTAYFPRFYFDSETGKCTPFIYGGCEGNSYVDEKLHACRAIC). Cystine bridges form between Cys-4-Cys-54, Cys-13-Cys-37, and Cys-29-Cys-50.

Belongs to the venom Kunitz-type family. Sea anemone type 2 potassium channel toxin subfamily.

Its subcellular location is the secreted. It is found in the nematocyst. Functionally, serine protease inhibitor that acts on trypsin. This chain is PI-stichotoxin-Hcr2a, found in Radianthus crispa (Leathery sea anemone).